The sequence spans 301 residues: MLTLFGNKRPSKSAGKDEGPLVSLAKHNGSVEVSKPWSSSDEKLALTKAMDASKGKILLNIEGTSSFGTYESDSIIESEGYDLSARMIVDTNHHISNWKNDLFVGNGKQNANKVIKICPTWDSRKQYMMISRIVIWVCPTIPNPTGKLVVALIDPNMPSGKQVILKGQGTITDPICFVFYLNWSIPKMNNTPENCCQLHLMCSQEYKKGVSFGSVMYSWTKEFGDSPRADKDKCMVIPLNRAIRARSQAFIEACKLIIPKCNSEKQIKKQLKELSSNLERSVEEEEEGISDSVAQLSFDEI.

Disordered stretches follow at residues 1–22 (MLTL…GPLV) and 282–301 (VEEE…FDEI). 2 essential for tubule formation and cell-to-cell movement regions span residues 19-159 (GPLV…NMPS) and 209-283 (GVSF…RSVE). An essential for long-distance movement region spans residues 284–288 (EEEEG).

Belongs to the tospovirus movement protein family. As to quaternary structure, oligomerizes to form tubule structures through host plasmodesma. Interacts with host A.thaliana At4g26020 protein, which is involved in intra- and inter-cellular trafficking.

Its subcellular location is the host cell junction. The protein localises to the host plasmodesma. In terms of biological role, viral movemement protein which is responsible for cell-to cell spread of viral genome. Increases the size exclusion limit (SEL) of plasmodesmata by forming tubules structures, thereby allowing viral ribonucleocapsids to spread directly to neighboring cells. The polypeptide is Movement protein (NSM) (Tomato spotted wilt virus (strain Brazilian Br-01) (TSWV)).